The primary structure comprises 95 residues: DASH complex subunit DAD3 (95 aa).

It belongs to the DASH complex DAD3 family. Component of the DASH complex consisting of ASK1, DAD1, DAD2, DAD3, DAD4, DAM1, DUO1, HSK3, SPC19 and SPC34, with a stoichiometry of one copy of each subunit per complex. Multiple DASH complexes oligomerize to form a ring that encircles spindle microtubules and organizes the rod-like NDC80 complexes of the outer kinetochore. DASH complex oligomerization strengthens microtubule attachments. On cytoplasmic microtubules, DASH complexes appear to form patches instead of rings.

It localises to the chromosome. It is found in the centromere. The protein localises to the kinetochore. The protein resides in the cytoplasm. Its subcellular location is the cytoskeleton. It localises to the spindle. It is found in the nucleus. Functionally, component of the DASH complex that connects microtubules with kinetochores and couples microtubule depolymerisation to chromosome movement; it is involved in retrieving kinetochores to the spindle poles before their re-orientation on the spindle in early mitosis and allows microtubule depolymerization to pull chromosomes apart and resist detachment during anaphase. Kinetochores, consisting of a centromere-associated inner segment and a microtubule-contacting outer segment, play a crucial role in chromosome segregation by mediating the physical connection between centromeric DNA and microtubules. Kinetochores also serve as an input point for the spindle assembly checkpoint, which delays anaphase until all chromosomes have bioriented on the mitotic spindle. The sequence is that of DASH complex subunit DAD3 from Chaetomium thermophilum (strain DSM 1495 / CBS 144.50 / IMI 039719) (Thermochaetoides thermophila).